Consider the following 361-residue polypeptide: Beta-hexosaminidase (361 aa).

Residues Asp69, Arg77, Arg144, and 174 to 175 each bind substrate; that span reads KH. His187 (proton donor/acceptor) is an active-site residue. Catalysis depends on Asp258, which acts as the Nucleophile.

The protein belongs to the glycosyl hydrolase 3 family. NagZ subfamily.

It localises to the cytoplasm. The catalysed reaction is Hydrolysis of terminal non-reducing N-acetyl-D-hexosamine residues in N-acetyl-beta-D-hexosaminides.. Its pathway is cell wall biogenesis; peptidoglycan recycling. Functionally, plays a role in peptidoglycan recycling by cleaving the terminal beta-1,4-linked N-acetylglucosamine (GlcNAc) from peptide-linked peptidoglycan fragments, giving rise to free GlcNAc, anhydro-N-acetylmuramic acid and anhydro-N-acetylmuramic acid-linked peptides. This chain is Beta-hexosaminidase, found in Neisseria meningitidis serogroup A / serotype 4A (strain DSM 15465 / Z2491).